The following is a 147-amino-acid chain: MADFDAVLKCWGPVEADYTTIGGLVLTRLFKEHPETQKLFPKFAGIAQADIAGNAAVSAHGATVLKKLGELLKAKGSHAAILKPLANSHATKHKIPINNFKLISEVLVKVMHEKAGLDAGGQTALRNVMGIIIADLEANYKELGFSG.

Positions 2–141 (ADFDAVLKCW…IIADLEANYK (140 aa)) constitute a Globin domain. His-60 lines the nitrite pocket. His-60 contributes to the O2 binding site. His-89 provides a ligand contact to heme b.

This sequence belongs to the globin family. Monomeric.

The protein localises to the cytoplasm. It localises to the sarcoplasm. The catalysed reaction is Fe(III)-heme b-[protein] + nitric oxide + H2O = Fe(II)-heme b-[protein] + nitrite + 2 H(+). It carries out the reaction H2O2 + AH2 = A + 2 H2O. Functionally, monomeric heme protein which primary function is to store oxygen and facilitate its diffusion within muscle tissues. Reversibly binds oxygen through a pentacoordinated heme iron and enables its timely and efficient release as needed during periods of heightened demand. Depending on the oxidative conditions of tissues and cells, and in addition to its ability to bind oxygen, it also has a nitrite reductase activity whereby it regulates the production of bioactive nitric oxide. Under stress conditions, like hypoxia and anoxia, it also protects cells against reactive oxygen species thanks to its pseudoperoxidase activity. This Thunnus obesus (Bigeye tuna) protein is Myoglobin (mb).